Here is a 196-residue protein sequence, read N- to C-terminus: Acyl-homoserine-lactone synthase (196 aa).

Belongs to the autoinducer synthase family.

The enzyme catalyses a fatty acyl-[ACP] + S-adenosyl-L-methionine = an N-acyl-L-homoserine lactone + S-methyl-5'-thioadenosine + holo-[ACP] + H(+). Functionally, required for the synthesis of a yet unknown N-aceyl-homoserine lactone (N-aceyl-HSL), an autoinducer molecule which binds to PhzR and thus regulates phenazine production. This is Acyl-homoserine-lactone synthase (phzI) from Pseudomonas fluorescens.